A 237-amino-acid polypeptide reads, in one-letter code: uncharacterized protein (237 aa).

The N-terminal stretch at 1–28 is a signal peptide; that stretch reads MVFSFSTFNRLVTFTVMAAIVSVRPLTA.

This is an uncharacterized protein from Sinorhizobium fredii (strain NBRC 101917 / NGR234).